The chain runs to 1135 residues: Eukaryotic translation initiation factor 3 subunit A (1135 aa).

One can recognise a PCI domain in the interval 319-501 (LQRMAAHVLL…NSIYFGTDLT (183 aa)). Basic and acidic residues-rich tracts occupy residues 588–623 (QNNA…EERE) and 829–899 (AAEE…RGGD). Disordered stretches follow at residues 588-631 (QNNA…QNEI) and 829-1135 (AAEE…VKRR). Serine 908 carries the phosphoserine modification. 4 stretches are compositionally biased toward basic and acidic residues: residues 920–971 (ERNE…EPDS), 985–1045 (SRDD…EPQR), 1053–1081 (DAPR…RGDQ), and 1104–1125 (AREE…KAAD).

It belongs to the eIF-3 subunit A family. In terms of assembly, component of the eukaryotic translation initiation factor 3 (eIF-3) complex. The eIF-3 complex interacts with pix.

It localises to the cytoplasm. In terms of biological role, RNA-binding component of the eukaryotic translation initiation factor 3 (eIF-3) complex, which is involved in protein synthesis of a specialized repertoire of mRNAs and, together with other initiation factors, stimulates binding of mRNA and methionyl-tRNAi to the 40S ribosome. The eIF-3 complex specifically targets and initiates translation of a subset of mRNAs involved in cell proliferation. In Drosophila erecta (Fruit fly), this protein is Eukaryotic translation initiation factor 3 subunit A.